Reading from the N-terminus, the 605-residue chain is UvrABC system protein C (605 aa).

Residues 15–92 form the GIY-YIG domain; sequence GLPGCYLMKN…IQKHQPYFNI (78 aa). Residues 197 to 232 enclose the UVR domain; sequence GHAKKDLTQRMEKAAADMAYERAGDLRDQIRYIEAT.

Belongs to the UvrC family. In terms of assembly, interacts with UvrB in an incision complex.

It is found in the cytoplasm. The UvrABC repair system catalyzes the recognition and processing of DNA lesions. UvrC both incises the 5' and 3' sides of the lesion. The N-terminal half is responsible for the 3' incision and the C-terminal half is responsible for the 5' incision. In Levilactobacillus brevis (strain ATCC 367 / BCRC 12310 / CIP 105137 / JCM 1170 / LMG 11437 / NCIMB 947 / NCTC 947) (Lactobacillus brevis), this protein is UvrABC system protein C.